The chain runs to 208 residues: Peptidyl-prolyl cis-trans isomerase FKBP13, chloroplastic (208 aa).

2 disulfides stabilise this stretch: C84–C96 and C185–C190. A PPIase FKBP-type domain is found at 109–208 (GQLIKAHYVG…LFDIEYIGKA (100 aa)).

The protein belongs to the FKBP-type PPIase family. In terms of assembly, interacts in vitro with LTO1. The precursor, but not the mature form of the protein, interacts with the Rieske protein. As to expression, expressed in stems, leaves and developing flower buds, but not in roots.

The protein resides in the plastid. It localises to the chloroplast thylakoid lumen. It carries out the reaction [protein]-peptidylproline (omega=180) = [protein]-peptidylproline (omega=0). With respect to regulation, PPIase activity is optimal in oxidized form (S-S) and minimal in reduced form (SH). Reduction of the oxidized form is mediated by thioredoxin (TRX-M). In terms of biological role, PPIases accelerate the folding of proteins. It catalyzes the cis-trans isomerization of proline imidic peptide bonds in oligopeptides. Responsive of the major PPIase activity in the chloroplast thylakoid lumen. Regulates the accumulation of Rieske protein, an essential component of the photosynthetic electron transport chain. The polypeptide is Peptidyl-prolyl cis-trans isomerase FKBP13, chloroplastic (Arabidopsis thaliana (Mouse-ear cress)).